The following is a 254-amino-acid chain: Ribosomal RNA small subunit methyltransferase G (254 aa).

The segment at 84–109 is insert; the sequence is NTESKTSLNNAETKNTNEALLTSEPF. S-adenosyl-L-methionine is bound by residues Gly-115, Phe-120, 171-172, and Arg-185; that span reads AE.

Belongs to the methyltransferase superfamily. RNA methyltransferase RsmG family.

The protein resides in the cytoplasm. In terms of biological role, specifically methylates the N7 position of a guanine in 16S rRNA. The polypeptide is Ribosomal RNA small subunit methyltransferase G (Treponema denticola (strain ATCC 35405 / DSM 14222 / CIP 103919 / JCM 8153 / KCTC 15104)).